The following is a 158-amino-acid chain: NAD(P)H-quinone oxidoreductase subunit J, chloroplastic (158 aa).

This sequence belongs to the complex I 30 kDa subunit family. NDH is composed of at least 16 different subunits, 5 of which are encoded in the nucleus.

Its subcellular location is the plastid. The protein resides in the chloroplast thylakoid membrane. The catalysed reaction is a plastoquinone + NADH + (n+1) H(+)(in) = a plastoquinol + NAD(+) + n H(+)(out). It carries out the reaction a plastoquinone + NADPH + (n+1) H(+)(in) = a plastoquinol + NADP(+) + n H(+)(out). In terms of biological role, NDH shuttles electrons from NAD(P)H:plastoquinone, via FMN and iron-sulfur (Fe-S) centers, to quinones in the photosynthetic chain and possibly in a chloroplast respiratory chain. The immediate electron acceptor for the enzyme in this species is believed to be plastoquinone. Couples the redox reaction to proton translocation, and thus conserves the redox energy in a proton gradient. This is NAD(P)H-quinone oxidoreductase subunit J, chloroplastic from Aethionema cordifolium (Lebanon stonecress).